Reading from the N-terminus, the 630-residue chain is Golgin subfamily A member 8K (630 aa).

Residues 1-76 (MAEETQHNKL…TSSATLKDLE (76 aa)) are disordered. 2 coiled-coil regions span residues 86–148 (LDSR…LNTD) and 224–411 (LTQL…QQNQ). Over residues 352-362 (KQEERIQEQHK) the composition is skewed to basic and acidic residues. 2 disordered regions span residues 352–379 (KQEE…EPNN) and 424–444 (GEGH…PMPS).

This sequence belongs to the GOLGA8 family.

The sequence is that of Golgin subfamily A member 8K from Homo sapiens (Human).